The chain runs to 223 residues: Deoxyribose-phosphate aldolase (223 aa).

The active-site Proton donor/acceptor is Asp91. Residue Lys153 is the Schiff-base intermediate with acetaldehyde of the active site. Lys182 serves as the catalytic Proton donor/acceptor.

It belongs to the DeoC/FbaB aldolase family. DeoC type 1 subfamily.

The protein localises to the cytoplasm. It catalyses the reaction 2-deoxy-D-ribose 5-phosphate = D-glyceraldehyde 3-phosphate + acetaldehyde. The protein operates within carbohydrate degradation; 2-deoxy-D-ribose 1-phosphate degradation; D-glyceraldehyde 3-phosphate and acetaldehyde from 2-deoxy-alpha-D-ribose 1-phosphate: step 2/2. Catalyzes a reversible aldol reaction between acetaldehyde and D-glyceraldehyde 3-phosphate to generate 2-deoxy-D-ribose 5-phosphate. The sequence is that of Deoxyribose-phosphate aldolase from Streptococcus pyogenes serotype M28 (strain MGAS6180).